A 274-amino-acid chain; its full sequence is Endonuclease 8-like L720 (274 aa).

The FPG-type; degenerate zinc finger occupies 241–274 (RIYRKSLCPLGHKTIRKKIGLRNRMTTWCPVCQL).

This sequence belongs to the FPG family.

The sequence is that of Endonuclease 8-like L720 from Acanthamoeba polyphaga mimivirus (APMV).